Reading from the N-terminus, the 430-residue chain is Phosphomethylpyrimidine synthase (430 aa).

Substrate contacts are provided by residues Asn-67, Met-96, Tyr-125, His-161, 183 to 185 (SRG), 224 to 227 (DALR), and Glu-263. A Zn(2+)-binding site is contributed by His-267. Tyr-290 serves as a coordination point for substrate. His-331 provides a ligand contact to Zn(2+). Cys-406, Cys-409, and Cys-413 together coordinate [4Fe-4S] cluster.

This sequence belongs to the ThiC family. Homodimer. [4Fe-4S] cluster serves as cofactor.

The enzyme catalyses 5-amino-1-(5-phospho-beta-D-ribosyl)imidazole + S-adenosyl-L-methionine = 4-amino-2-methyl-5-(phosphooxymethyl)pyrimidine + CO + 5'-deoxyadenosine + formate + L-methionine + 3 H(+). Its pathway is cofactor biosynthesis; thiamine diphosphate biosynthesis. In terms of biological role, catalyzes the synthesis of the hydroxymethylpyrimidine phosphate (HMP-P) moiety of thiamine from aminoimidazole ribotide (AIR) in a radical S-adenosyl-L-methionine (SAM)-dependent reaction. The protein is Phosphomethylpyrimidine synthase of Campylobacter jejuni subsp. jejuni serotype O:23/36 (strain 81-176).